Consider the following 180-residue polypeptide: Trafficking protein particle complex subunit 3 (180 aa).

Cys68 carries S-palmitoyl cysteine lipidation.

It belongs to the TRAPP small subunits family. BET3 subfamily. As to quaternary structure, homodimer. Part of the multisubunit TRAPP (transport protein particle) complex.

It localises to the golgi apparatus. Its subcellular location is the cis-Golgi network. It is found in the endoplasmic reticulum. In terms of biological role, may play a role in vesicular transport from endoplasmic reticulum to Golgi. The polypeptide is Trafficking protein particle complex subunit 3 (TRAPPC3) (Gallus gallus (Chicken)).